Consider the following 294-residue polypeptide: uncharacterized protein (294 aa).

This is an uncharacterized protein from Mycoplasma pneumoniae (strain ATCC 29342 / M129 / Subtype 1) (Mycoplasmoides pneumoniae).